A 377-amino-acid polypeptide reads, in one-letter code: Chaperone protein DnaJ (377 aa).

The J domain occupies 5 to 70 (DYYEILGVSK…QKRAAYDQYG (66 aa)). The segment at 132-210 (GVTKEIRIPT…CHGHGRVEKT (79 aa)) adopts a CR-type zinc-finger fold. 8 residues coordinate Zn(2+): Cys-145, Cys-148, Cys-162, Cys-165, Cys-184, Cys-187, Cys-198, and Cys-201. CXXCXGXG motif repeat units follow at residues 145 to 152 (CDVCHGSG), 162 to 169 (CPTCHGAG), 184 to 191 (CPHCQGRG), and 198 to 205 (CNKCHGHG).

This sequence belongs to the DnaJ family. In terms of assembly, homodimer. It depends on Zn(2+) as a cofactor.

Its subcellular location is the cytoplasm. Functionally, participates actively in the response to hyperosmotic and heat shock by preventing the aggregation of stress-denatured proteins and by disaggregating proteins, also in an autonomous, DnaK-independent fashion. Unfolded proteins bind initially to DnaJ; upon interaction with the DnaJ-bound protein, DnaK hydrolyzes its bound ATP, resulting in the formation of a stable complex. GrpE releases ADP from DnaK; ATP binding to DnaK triggers the release of the substrate protein, thus completing the reaction cycle. Several rounds of ATP-dependent interactions between DnaJ, DnaK and GrpE are required for fully efficient folding. Also involved, together with DnaK and GrpE, in the DNA replication of plasmids through activation of initiation proteins. In Klebsiella pneumoniae (strain 342), this protein is Chaperone protein DnaJ.